Consider the following 34-residue polypeptide: Photosystem II reaction center protein M (34 aa).

A helical membrane pass occupies residues 5–25 (ILGLIATALFIIIPTSFLLIL).

This sequence belongs to the PsbM family. As to quaternary structure, PSII is composed of 1 copy each of membrane proteins PsbA, PsbB, PsbC, PsbD, PsbE, PsbF, PsbH, PsbI, PsbJ, PsbK, PsbL, PsbM, PsbT, PsbX, PsbY, PsbZ, Psb30/Ycf12, at least 3 peripheral proteins of the oxygen-evolving complex and a large number of cofactors. It forms dimeric complexes.

The protein resides in the plastid. The protein localises to the chloroplast thylakoid membrane. One of the components of the core complex of photosystem II (PSII). PSII is a light-driven water:plastoquinone oxidoreductase that uses light energy to abstract electrons from H(2)O, generating O(2) and a proton gradient subsequently used for ATP formation. It consists of a core antenna complex that captures photons, and an electron transfer chain that converts photonic excitation into a charge separation. This subunit is found at the monomer-monomer interface. The chain is Photosystem II reaction center protein M from Nephroselmis olivacea (Green alga).